A 349-amino-acid chain; its full sequence is N-acetyltaurine hydrolase (349 aa).

The a divalent metal cation site is built by histidine 26, histidine 28, glutamate 169, histidine 201, histidine 230, and aspartate 298.

It belongs to the metallo-dependent hydrolases superfamily. Phosphotriesterase family. A divalent metal cation serves as cofactor. Expressed in the kidney, liver and brainstem.

It localises to the cytoplasm. The protein localises to the cytosol. The enzyme catalyses N-acetyltaurine + H2O = taurine + acetate. The catalysed reaction is N-propanoyltaurine + H2O = propanoate + taurine. It catalyses the reaction N-acetyl-L-methionine + H2O = L-methionine + acetate. It carries out the reaction N-acetyl-L-isoleucine + H2O = L-isoleucine + acetate. The enzyme catalyses N-acetyl-L-leucine + H2O = L-leucine + acetate. The catalysed reaction is N-acetyl-L-valine + H2O = L-valine + acetate. In terms of biological role, N-acetyltaurine hydrolase that regulates feeding by catalyzing the hydrolysis of N-acetyltaurine into taurine and acetate. N-acetyltaurine has anorexigenic and anti-obesity effects that are dependent on GFRAL receptor and GDF15. PTER also acts on other N-acetyl amino acids (Met, Ile, Leu, Val) and N-propionyltaurine, but at lower rates. This is N-acetyltaurine hydrolase from Mus musculus (Mouse).